A 239-amino-acid polypeptide reads, in one-letter code: tRNA (guanine-N(7)-)-methyltransferase (239 aa).

Positions 68, 93, 120, and 143 each coordinate S-adenosyl-L-methionine. Aspartate 143 is an active-site residue. Substrate contacts are provided by residues lysine 147, aspartate 180, and 217–220; that span reads TKFE.

Belongs to the class I-like SAM-binding methyltransferase superfamily. TrmB family.

It carries out the reaction guanosine(46) in tRNA + S-adenosyl-L-methionine = N(7)-methylguanosine(46) in tRNA + S-adenosyl-L-homocysteine. The protein operates within tRNA modification; N(7)-methylguanine-tRNA biosynthesis. Catalyzes the formation of N(7)-methylguanine at position 46 (m7G46) in tRNA. This is tRNA (guanine-N(7)-)-methyltransferase from Vibrio cholerae serotype O1 (strain ATCC 39541 / Classical Ogawa 395 / O395).